Consider the following 195-residue polypeptide: 7-methyl-GTP pyrophosphatase (195 aa).

D71 acts as the Proton acceptor in catalysis.

The protein belongs to the Maf family. YceF subfamily. Requires a divalent metal cation as cofactor.

It is found in the cytoplasm. It carries out the reaction N(7)-methyl-GTP + H2O = N(7)-methyl-GMP + diphosphate + H(+). Functionally, nucleoside triphosphate pyrophosphatase that hydrolyzes 7-methyl-GTP (m(7)GTP). May have a dual role in cell division arrest and in preventing the incorporation of modified nucleotides into cellular nucleic acids. In Shewanella oneidensis (strain ATCC 700550 / JCM 31522 / CIP 106686 / LMG 19005 / NCIMB 14063 / MR-1), this protein is 7-methyl-GTP pyrophosphatase.